Consider the following 317-residue polypeptide: 4-diphosphocytidyl-2-C-methyl-D-erythritol kinase (317 aa).

The active site involves Lys-17. 109–119 (PVAGGMGGGSA) provides a ligand contact to ATP. Asp-151 is an active-site residue.

Belongs to the GHMP kinase family. IspE subfamily.

It catalyses the reaction 4-CDP-2-C-methyl-D-erythritol + ATP = 4-CDP-2-C-methyl-D-erythritol 2-phosphate + ADP + H(+). It participates in isoprenoid biosynthesis; isopentenyl diphosphate biosynthesis via DXP pathway; isopentenyl diphosphate from 1-deoxy-D-xylulose 5-phosphate: step 3/6. Its function is as follows. Catalyzes the phosphorylation of the position 2 hydroxy group of 4-diphosphocytidyl-2C-methyl-D-erythritol. This chain is 4-diphosphocytidyl-2-C-methyl-D-erythritol kinase, found in Paenarthrobacter aurescens (strain TC1).